The following is a 680-amino-acid chain: DNA-directed RNA polymerase subunit beta' (680 aa).

Zn(2+) is bound by residues cysteine 69, cysteine 71, cysteine 87, and cysteine 90. Positions 489, 491, and 493 each coordinate Mg(2+).

It belongs to the RNA polymerase beta' chain family. RpoC1 subfamily. As to quaternary structure, in plastids the minimal PEP RNA polymerase catalytic core is composed of four subunits: alpha, beta, beta', and beta''. When a (nuclear-encoded) sigma factor is associated with the core the holoenzyme is formed, which can initiate transcription. Requires Mg(2+) as cofactor. Zn(2+) serves as cofactor.

The protein resides in the plastid. It localises to the chloroplast. It carries out the reaction RNA(n) + a ribonucleoside 5'-triphosphate = RNA(n+1) + diphosphate. Functionally, DNA-dependent RNA polymerase catalyzes the transcription of DNA into RNA using the four ribonucleoside triphosphates as substrates. The chain is DNA-directed RNA polymerase subunit beta' from Nasturtium officinale (Watercress).